The chain runs to 464 residues: Serine/threonine-protein kinase 38-like (464 aa).

A2 carries the N-acetylalanine modification. The interval 63–88 is S100B binding; sequence KKLRRSQHARKETEFLRLKRTRLGLD. Phosphothreonine is present on T75. The region spanning 90 to 383 is the Protein kinase domain; it reads FESLKVIGRG…VEEIKGHPFF (294 aa). Residues 96-104 and K119 contribute to the ATP site; that span reads IGRGAFGEV. The Proton acceptor role is filled by D213. S282 carries the phosphoserine; by autocatalysis modification. An AGC-kinase C-terminal domain is found at 384-453; it reads EGVDWEHIRE…KRFEGLTQRG (70 aa). T442 carries the post-translational modification Phosphothreonine; by STK24/MST3.

This sequence belongs to the protein kinase superfamily. AGC Ser/Thr protein kinase family. Homodimeric S100B binds two molecules of STK38L. Interacts with MICAL1; leading to inhibit the protein kinase activity by antagonizing activation by MST1/STK4. Interacts with MOB1 and MOB2. Requires Mg(2+) as cofactor. In terms of tissue distribution, ubiquitously expressed with highest levels observed in the thymus.

The protein localises to the cytoplasm. It is found in the cytoskeleton. It localises to the membrane. It carries out the reaction L-seryl-[protein] + ATP = O-phospho-L-seryl-[protein] + ADP + H(+). The catalysed reaction is L-threonyl-[protein] + ATP = O-phospho-L-threonyl-[protein] + ADP + H(+). With respect to regulation, activated by binding of S100B which releases autoinhibitory N-lobe interactions, enabling ATP to bind and the autophosphorylation of Ser-282. Thr-442 then undergoes calcium-dependent phosphorylation by STK24/MST3. Interactions between phosphorylated Thr-442 and the N-lobe promote additional structural changes that complete the activation of the kinase. Autoinhibition is also released by the binding of MOB1/MOBKL1A and MOB2/HCCA2 to the N-terminal of STK38L. Its function is as follows. Involved in the regulation of structural processes in differentiating and mature neuronal cells. This Homo sapiens (Human) protein is Serine/threonine-protein kinase 38-like.